Reading from the N-terminus, the 139-residue chain is Ribonuclease P protein component (139 aa).

Residues 116-139 (FSKNKSTIGGEYSPKNEQCESELP) are disordered.

The protein belongs to the RnpA family. In terms of assembly, consists of a catalytic RNA component (M1 or rnpB) and a protein subunit.

It carries out the reaction Endonucleolytic cleavage of RNA, removing 5'-extranucleotides from tRNA precursor.. Its function is as follows. RNaseP catalyzes the removal of the 5'-leader sequence from pre-tRNA to produce the mature 5'-terminus. It can also cleave other RNA substrates such as 4.5S RNA. The protein component plays an auxiliary but essential role in vivo by binding to the 5'-leader sequence and broadening the substrate specificity of the ribozyme. The chain is Ribonuclease P protein component from Chlamydia abortus (strain DSM 27085 / S26/3) (Chlamydophila abortus).